The chain runs to 115 residues: Ribonuclease P protein component (115 aa).

This sequence belongs to the RnpA family. In terms of assembly, consists of a catalytic RNA component (M1 or rnpB) and a protein subunit.

It catalyses the reaction Endonucleolytic cleavage of RNA, removing 5'-extranucleotides from tRNA precursor.. Its function is as follows. RNaseP catalyzes the removal of the 5'-leader sequence from pre-tRNA to produce the mature 5'-terminus. It can also cleave other RNA substrates such as 4.5S RNA. The protein component plays an auxiliary but essential role in vivo by binding to the 5'-leader sequence and broadening the substrate specificity of the ribozyme. This chain is Ribonuclease P protein component, found in Bacillus cereus (strain G9842).